Here is a 173-residue protein sequence, read N- to C-terminus: NAD(P)H-quinone oxidoreductase subunit I, chloroplastic (173 aa).

2 4Fe-4S ferredoxin-type domains span residues 55–84 (GRIH…VDWD) and 95–124 (RSYS…MTEE). Residues Cys64, Cys67, Cys70, Cys74, Cys104, Cys107, Cys110, and Cys114 each coordinate [4Fe-4S] cluster.

This sequence belongs to the complex I 23 kDa subunit family. In terms of assembly, NDH is composed of at least 16 different subunits, 5 of which are encoded in the nucleus. Requires [4Fe-4S] cluster as cofactor.

Its subcellular location is the plastid. It is found in the chloroplast thylakoid membrane. The catalysed reaction is a plastoquinone + NADH + (n+1) H(+)(in) = a plastoquinol + NAD(+) + n H(+)(out). It carries out the reaction a plastoquinone + NADPH + (n+1) H(+)(in) = a plastoquinol + NADP(+) + n H(+)(out). NDH shuttles electrons from NAD(P)H:plastoquinone, via FMN and iron-sulfur (Fe-S) centers, to quinones in the photosynthetic chain and possibly in a chloroplast respiratory chain. The immediate electron acceptor for the enzyme in this species is believed to be plastoquinone. Couples the redox reaction to proton translocation, and thus conserves the redox energy in a proton gradient. The sequence is that of NAD(P)H-quinone oxidoreductase subunit I, chloroplastic from Nephroselmis olivacea (Green alga).